Here is a 210-residue protein sequence, read N- to C-terminus: Outer-membrane lipoprotein LolB (210 aa).

The first 29 residues, Met-1 to Gly-29, serve as a signal peptide directing secretion. Cys-30 is lipidated: N-palmitoyl cysteine. Cys-30 carries S-diacylglycerol cysteine lipidation.

Belongs to the LolB family. As to quaternary structure, monomer.

It is found in the cell outer membrane. Functionally, plays a critical role in the incorporation of lipoproteins in the outer membrane after they are released by the LolA protein. In Coxiella burnetii (strain CbuG_Q212) (Coxiella burnetii (strain Q212)), this protein is Outer-membrane lipoprotein LolB.